The chain runs to 864 residues: Valine--tRNA ligase (864 aa).

The 'HIGH' region motif lies at 42–52; that stretch reads PTISGKLHIGH. Residues 589 to 593 carry the 'KMSKS' region motif; the sequence is KMSKS. K592 serves as a coordination point for ATP.

The protein belongs to the class-I aminoacyl-tRNA synthetase family. ValS type 2 subfamily. In terms of assembly, monomer.

It localises to the cytoplasm. The enzyme catalyses tRNA(Val) + L-valine + ATP = L-valyl-tRNA(Val) + AMP + diphosphate. Catalyzes the attachment of valine to tRNA(Val). As ValRS can inadvertently accommodate and process structurally similar amino acids such as threonine, to avoid such errors, it has a 'posttransfer' editing activity that hydrolyzes mischarged Thr-tRNA(Val) in a tRNA-dependent manner. The protein is Valine--tRNA ligase of Wolbachia pipientis wMel.